Consider the following 120-residue polypeptide: Large ribosomal subunit protein bL12 (120 aa).

The protein belongs to the bacterial ribosomal protein bL12 family. As to quaternary structure, homodimer. Part of the ribosomal stalk of the 50S ribosomal subunit. Forms a multimeric L10(L12)X complex, where L10 forms an elongated spine to which 2 to 4 L12 dimers bind in a sequential fashion. Binds GTP-bound translation factors.

Forms part of the ribosomal stalk which helps the ribosome interact with GTP-bound translation factors. Is thus essential for accurate translation. This Shouchella clausii (strain KSM-K16) (Alkalihalobacillus clausii) protein is Large ribosomal subunit protein bL12.